Consider the following 192-residue polypeptide: Adenylate kinase (192 aa).

10 to 18 contacts ATP; the sequence is GVPGVGSTT.

The protein belongs to the archaeal adenylate kinase family. Monomer.

The protein resides in the cytoplasm. It catalyses the reaction AMP + ATP = 2 ADP. The protein is Adenylate kinase of Methanococcus vannielii (strain ATCC 35089 / DSM 1224 / JCM 13029 / OCM 148 / SB).